The primary structure comprises 119 residues: Large ribosomal subunit protein bL19 (119 aa).

The protein belongs to the bacterial ribosomal protein bL19 family.

This protein is located at the 30S-50S ribosomal subunit interface and may play a role in the structure and function of the aminoacyl-tRNA binding site. The protein is Large ribosomal subunit protein bL19 of Leuconostoc mesenteroides subsp. mesenteroides (strain ATCC 8293 / DSM 20343 / BCRC 11652 / CCM 1803 / JCM 6124 / NCDO 523 / NBRC 100496 / NCIMB 8023 / NCTC 12954 / NRRL B-1118 / 37Y).